The following is a 277-amino-acid chain: Phosphate import ATP-binding protein PstB 2 (277 aa).

In terms of domain architecture, ABC transporter spans 31 to 272; it reads IEVPGLNLFY…PAKKQTEDYI (242 aa). 63–70 contacts ATP; sequence GPSGCGKS.

The protein belongs to the ABC transporter superfamily. Phosphate importer (TC 3.A.1.7) family. In terms of assembly, the complex is composed of two ATP-binding proteins (PstB), two transmembrane proteins (PstC and PstA) and a solute-binding protein (PstS).

Its subcellular location is the cell inner membrane. It carries out the reaction phosphate(out) + ATP + H2O = ADP + 2 phosphate(in) + H(+). Its function is as follows. Part of the ABC transporter complex PstSACB involved in phosphate import. Responsible for energy coupling to the transport system. This is Phosphate import ATP-binding protein PstB 2 from Pseudomonas syringae pv. syringae (strain B728a).